A 279-amino-acid chain; its full sequence is Acetylglutamate kinase (279 aa).

Residues 64–65 (GG), Arg-86, and Asn-177 each bind substrate.

It belongs to the acetylglutamate kinase family. ArgB subfamily.

Its subcellular location is the cytoplasm. It carries out the reaction N-acetyl-L-glutamate + ATP = N-acetyl-L-glutamyl 5-phosphate + ADP. It participates in amino-acid biosynthesis; L-arginine biosynthesis; N(2)-acetyl-L-ornithine from L-glutamate: step 2/4. In terms of biological role, catalyzes the ATP-dependent phosphorylation of N-acetyl-L-glutamate. This chain is Acetylglutamate kinase, found in Campylobacter jejuni subsp. jejuni serotype O:6 (strain 81116 / NCTC 11828).